The following is a 395-amino-acid chain: HORMA domain-containing protein 1 (395 aa).

The HORMA domain maps to 24 to 226 (QQSLVLVKRL…TPFHTFKVKV (203 aa)). Positions 329–395 (DVSESKTRSG…RKFSEPKEYV (67 aa)) are disordered. Residues 344 to 353 (KMANGNQPVK) are compositionally biased toward polar residues. A compositionally biased stretch (basic and acidic residues) spans 354 to 363 (SSKENRKRNQ). Ser377 is modified (phosphoserine). The short motif at 384–387 (KRRK) is the Nuclear localization signal element.

Interacts with HORMAD2. Interacts with IHO1. Post-translationally, phosphorylated at Ser-378 in a SPO11-dependent manner.

Its subcellular location is the nucleus. It localises to the chromosome. Plays a key role in meiotic progression. Regulates 3 different functions during meiosis: ensures that sufficient numbers of processed DNA double-strand breaks (DSBs) are available for successful homology search by increasing the steady-state numbers of single-stranded DSB ends. Promotes synaptonemal-complex formation independently of its role in homology search. Plays a key role in the male mid-pachytene checkpoint and the female meiotic prophase checkpoint: required for efficient build-up of ATR activity on unsynapsed chromosome regions, a process believed to form the basis of meiotic silencing of unsynapsed chromatin (MSUC) and meiotic prophase quality control in both sexes. The polypeptide is HORMA domain-containing protein 1 (HORMAD1) (Canis lupus familiaris (Dog)).